Reading from the N-terminus, the 159-residue chain is Protein RseC (159 aa).

Over methionine 1 to glycine 72 the chain is Cytoplasmic. The helical transmembrane segment at serine 73 to leucine 95 threads the bilayer. The Periplasmic portion of the chain corresponds to phenylalanine 96–leucine 98. Residues leucine 99 to alanine 121 traverse the membrane as a helical segment. Topologically, residues arginine 122–glutamine 159 are cytoplasmic.

Belongs to the RseC family.

It localises to the cell inner membrane. May play a role in reduction of the SoxR iron-sulfur cluster. May work together with the RsxABCDGE complex. The chain is Protein RseC from Escherichia coli (strain K12).